Consider the following 347-residue polypeptide: MEVRVESLRKEFGRFPALVDVTLDILSGELIALLGPSGSGKTTLLRLIAGLESPTEGMIFFGDEDASKRTVQERNIGFVFQHYALFRHMTVLDNVTFGLKVRPANRRPPAAEIRRRALDLIDLVQLSGLEKRYPAQLSGGQRQRVALARAMAVEPSVLLLDEPFGALDAQVRKELRRWLREIHDRTGYTTLFVTHDQEEALELADRVVVMSKGAIEQVGTPDEIYDHPVSPFVYGFIGQSNCLNVTLANGEIWFEGRPIGLRAANEPDGQATLFFRPHDVELIEGGSGCLAGRVTASRRVAGTRHLELDLGKTQSSIEVELPPELASSADRTRIALRPTKWKLFCGE.

The ABC transporter domain maps to 3-237 (VRVESLRKEF…PVSPFVYGFI (235 aa)). 35-42 (GPSGSGKT) is a binding site for ATP.

Belongs to the ABC transporter superfamily. Sulfate/tungstate importer (TC 3.A.1.6) family. As to quaternary structure, the complex is composed of two ATP-binding proteins (CysA), two transmembrane proteins (CysT and CysW) and a solute-binding protein (CysP).

The protein resides in the cell inner membrane. The catalysed reaction is sulfate(out) + ATP + H2O = sulfate(in) + ADP + phosphate + H(+). The enzyme catalyses thiosulfate(out) + ATP + H2O = thiosulfate(in) + ADP + phosphate + H(+). In terms of biological role, part of the ABC transporter complex CysAWTP involved in sulfate/thiosulfate import. Responsible for energy coupling to the transport system. In Rhizobium meliloti (strain 1021) (Ensifer meliloti), this protein is Sulfate/thiosulfate import ATP-binding protein CysA 1.